The sequence spans 239 residues: Adapter protein MecA (239 aa).

Residues 118–128 (EQRTKEKEAQG) are compositionally biased toward basic and acidic residues. Positions 118 to 137 (EQRTKEKEAQGSKRQKSSAR) are disordered.

The protein belongs to the MecA family. As to quaternary structure, homodimer.

Enables the recognition and targeting of unfolded and aggregated proteins to the ClpC protease or to other proteins involved in proteolysis. The chain is Adapter protein MecA from Staphylococcus aureus (strain bovine RF122 / ET3-1).